Here is a 152-residue protein sequence, read N- to C-terminus: Methylglyoxal synthase (152 aa).

An MGS-like domain is found at 6 to 152; that stretch reads RTIPAQKHIA…YQRYLQDRLK (147 aa). Substrate contacts are provided by residues His19, Lys23, 45–48, and 65–66; these read TGTT and SG. Asp71 acts as the Proton donor/acceptor in catalysis. His98 is a binding site for substrate.

Belongs to the methylglyoxal synthase family.

It carries out the reaction dihydroxyacetone phosphate = methylglyoxal + phosphate. Functionally, catalyzes the formation of methylglyoxal from dihydroxyacetone phosphate. This is Methylglyoxal synthase from Pectobacterium atrosepticum (strain SCRI 1043 / ATCC BAA-672) (Erwinia carotovora subsp. atroseptica).